A 503-amino-acid chain; its full sequence is ATP synthase subunit alpha (503 aa).

170–177 is an ATP binding site; sequence GDKQTGKT.

Belongs to the ATPase alpha/beta chains family. F-type ATPases have 2 components, CF(1) - the catalytic core - and CF(0) - the membrane proton channel. CF(1) has five subunits: alpha(3), beta(3), gamma(1), delta(1), epsilon(1). CF(0) has three main subunits: a(1), b(2) and c(9-12). The alpha and beta chains form an alternating ring which encloses part of the gamma chain. CF(1) is attached to CF(0) by a central stalk formed by the gamma and epsilon chains, while a peripheral stalk is formed by the delta and b chains.

The protein resides in the cell inner membrane. The catalysed reaction is ATP + H2O + 4 H(+)(in) = ADP + phosphate + 5 H(+)(out). Its function is as follows. Produces ATP from ADP in the presence of a proton gradient across the membrane. The alpha chain is a regulatory subunit. The protein is ATP synthase subunit alpha of Helicobacter acinonychis (strain Sheeba).